The sequence spans 214 residues: Ras-like protein 2 (214 aa).

GTP contacts are provided by residues 19–24 (GVGKSC), 35–41 (VDEYDPT), 65–66 (AG), 122–125 (NKCD), and 152–154 (SAK). Positions 38-46 (YDPTIEDSY) match the Effector region motif. The disordered stretch occupies residues 178–197 (QGYSTGSGGSNAGGPSNKME). Cysteine 211 carries the cysteine methyl ester modification. The S-farnesyl cysteine moiety is linked to residue cysteine 211. The propeptide at 212–214 (VLM) is removed in mature form.

This sequence belongs to the small GTPase superfamily. Ras family. Interacts with farnesyltransferase beta subunit RAM1.

It localises to the cell membrane. With respect to regulation, alternates between an inactive form bound to GDP and an active form bound to GTP. Activated by a guanine nucleotide-exchange factor (GEF) and inactivated by a GTPase-activating protein (GAP). Functionally, modulates the activity of the adenylate cyclase catalytic subunit and therefore affects the biosynthesis of cyclic-AMP. Plays a role in both surface attachment and surface recognition of appressoria, a highly specialized infection structure for plant penetration. Regulates appressorium formation by coordinated regulation of cAMP signaling and Pmk1 MAPK pathways. The sequence is that of Ras-like protein 2 from Pyricularia oryzae (strain 70-15 / ATCC MYA-4617 / FGSC 8958) (Rice blast fungus).